The following is a 218-amino-acid chain: MICRTCLRRASGFARPAAAAATRPMVAASSRAAFSTTFSVCTPPAATPAAAAPATSTAEAGLAPVPGAATTEQAKAAISSCPAGTKLNGLNYFKNKADPVALPDEEYPEWLWRCLEVQKKTDDAADADAGDEFSKSKKQRRLAMKRARAQEAKILASGDLEALAPKIPLQKQSVNLPGAVNGGVQDAVLADEKREELRKAMRKERKAKIKESNYLKAM.

This sequence belongs to the mitochondrion-specific ribosomal protein mL54 family. Component of the mitochondrial large ribosomal subunit (mt-LSU). Mature N.crassa 74S mitochondrial ribosomes consist of a small (37S) and a large (54S) subunit. The 37S small subunit contains a 16S ribosomal RNA (16S mt-rRNA) and 32 different proteins. The 54S large subunit contains a 23S rRNA (23S mt-rRNA) and 42 different proteins.

It localises to the mitochondrion. Component of the mitochondrial ribosome (mitoribosome), a dedicated translation machinery responsible for the synthesis of mitochondrial genome-encoded proteins, including at least some of the essential transmembrane subunits of the mitochondrial respiratory chain. The mitoribosomes are attached to the mitochondrial inner membrane and translation products are cotranslationally integrated into the membrane. In Neurospora crassa (strain ATCC 24698 / 74-OR23-1A / CBS 708.71 / DSM 1257 / FGSC 987), this protein is Large ribosomal subunit protein mL54 (mrpl37).